The sequence spans 130 residues: MTRLNTIADGMSALKNAGDTGKSEVTIEPASKLLGAMLRIMQDAGYIAGFEFIEDGRGGQLKVHLTGKINKCGAICPRFSVQLDEMEYWEKQYLPGKNFGLMILSTSHGVMSHVQARREGIGGELLGYVY.

Belongs to the universal ribosomal protein uS8 family. In terms of assembly, part of the 30S ribosomal subunit.

In terms of biological role, one of the primary rRNA binding proteins, it binds directly to 16S rRNA central domain where it helps coordinate assembly of the platform of the 30S subunit. This is Small ribosomal subunit protein uS8 from Methanoregula boonei (strain DSM 21154 / JCM 14090 / 6A8).